The chain runs to 343 residues: Dihydroorotase (343 aa).

Zn(2+) is bound by residues histidine 13 and histidine 15. Substrate contacts are provided by residues 15-17 and asparagine 41; that span reads HLR. Zn(2+) contacts are provided by lysine 99, histidine 136, and histidine 174. Lysine 99 is subject to N6-carboxylysine. Position 136 (histidine 136) interacts with substrate. Leucine 219 contributes to the substrate binding site. A Zn(2+)-binding site is contributed by aspartate 247. Aspartate 247 is a catalytic residue. The substrate site is built by histidine 251 and alanine 263.

The protein belongs to the metallo-dependent hydrolases superfamily. DHOase family. Class II DHOase subfamily. Homodimer. It depends on Zn(2+) as a cofactor.

It carries out the reaction (S)-dihydroorotate + H2O = N-carbamoyl-L-aspartate + H(+). It participates in pyrimidine metabolism; UMP biosynthesis via de novo pathway; (S)-dihydroorotate from bicarbonate: step 3/3. Functionally, catalyzes the reversible cyclization of carbamoyl aspartate to dihydroorotate. The polypeptide is Dihydroorotase (Shewanella oneidensis (strain ATCC 700550 / JCM 31522 / CIP 106686 / LMG 19005 / NCIMB 14063 / MR-1)).